A 208-amino-acid polypeptide reads, in one-letter code: Cysteine-rich protein 2 (208 aa).

In terms of domain architecture, LIM zinc-binding 1 spans 5 to 57; sequence CPKCDKTVCFAEKVSSLGKDWHKFCLKCERCSKTLTPGGHAEHDGKPFCHKPC. Lys23 bears the N6-acetyllysine mark. The disordered stretch occupies residues 98 to 119; it reads AEERKASGPPKGPSRASSVTTF. The residue at position 104 (Ser104) is a Phosphoserine. Residues 126–178 form the LIM zinc-binding 2 domain; the sequence is CPRCSKKVYFAEKVTSLGKDWHRPCLHCERCGKTLTPGGHAEHDGQPYCHKPC. Lys138 and Lys144 each carry N6-acetyllysine.

In terms of assembly, interacts with TGFB1I1.

This chain is Cysteine-rich protein 2 (CRIP2), found in Pongo abelii (Sumatran orangutan).